Here is a 223-residue protein sequence, read N- to C-terminus: DNA mismatch repair protein MutH (223 aa).

The protein belongs to the MutH family.

It localises to the cytoplasm. Its function is as follows. Sequence-specific endonuclease that cleaves unmethylated GATC sequences. It is involved in DNA mismatch repair. This chain is DNA mismatch repair protein MutH, found in Shewanella sp. (strain ANA-3).